A 660-amino-acid polypeptide reads, in one-letter code: tRNA 5-methylaminomethyl-2-thiouridine biosynthesis bifunctional protein MnmC (660 aa).

The tRNA (mnm(5)s(2)U34)-methyltransferase stretch occupies residues 1-242; that stretch reads MTDRIVPATL…KRAMLVGEFA (242 aa). Residues 266–660 form an FAD-dependent cmnm(5)s(2)U34 oxidoreductase region; it reads IGAGLAGCAV…VRALRHGRVA (395 aa).

It in the N-terminal section; belongs to the methyltransferase superfamily. tRNA (mnm(5)s(2)U34)-methyltransferase family. This sequence in the C-terminal section; belongs to the DAO family. It depends on FAD as a cofactor.

It is found in the cytoplasm. The enzyme catalyses 5-aminomethyl-2-thiouridine(34) in tRNA + S-adenosyl-L-methionine = 5-methylaminomethyl-2-thiouridine(34) in tRNA + S-adenosyl-L-homocysteine + H(+). In terms of biological role, catalyzes the last two steps in the biosynthesis of 5-methylaminomethyl-2-thiouridine (mnm(5)s(2)U) at the wobble position (U34) in tRNA. Catalyzes the FAD-dependent demodification of cmnm(5)s(2)U34 to nm(5)s(2)U34, followed by the transfer of a methyl group from S-adenosyl-L-methionine to nm(5)s(2)U34, to form mnm(5)s(2)U34. The chain is tRNA 5-methylaminomethyl-2-thiouridine biosynthesis bifunctional protein MnmC from Burkholderia pseudomallei (strain K96243).